A 792-amino-acid chain; its full sequence is E3 UFM1-protein ligase 1 (792 aa).

A2 carries the post-translational modification N-acetylalanine. The mediates interaction with DDRGK1 stretch occupies residues 2 to 200 (ADAWEEIRRL…RGLFSAITRP (199 aa)). Positions 2-212 (ADAWEEIRRL…VNSLISRYGF (211 aa)) are required for E3 UFM1-protein ligase activity. Residues 121–250 (DRLAEEVNDK…KAVFIPDIYS (130 aa)) are involved in CDK5RAP3-binding. The interval 200–400 (PTAVNSLISR…NPVHLITEED (201 aa)) is mediates interaction with TRIP4. Residues 412-471 (TSKKDKKDERRRKATEGSGSVRGGGGSNAREYKIKKTKKKGRKDDDSDDESSHTGKKKPE) are disordered. R433 carries the post-translational modification Omega-N-methylarginine. The segment covering 453–471 (RKDDDSDDESSHTGKKKPE) has biased composition (basic and acidic residues). S458 is modified (phosphoserine). The interval 488 to 682 (LQDAPEEFIS…QLKVTEDPAL (195 aa)) is mediates interaction with CDK5RAP3. T534 bears the Phosphothreonine mark. S752 carries the phosphoserine modification.

The protein belongs to the UFL1 family. Catalytic component of the UFM1 ribosome E3 ligase (UREL) complex, composed of UFL1, DDRGK1 and CDK5RAP3. Interacts with E2-like enzyme UFC1. Interacts with RELA. Interacts with NBN; promoting recruitment to double-strand breaks following DNA damage. Interacts (when phosphorylated) with YWHAG/14-3-3-gamma; sequestering UFL1 and preventing its association with PDCD1/PD-1 substrate. Post-translationally, ubiquitinated, leading to its degradation by the proteasome. Interaction with CDK5RAP3 protects both proteins against ubiquitination and degradation via the proteasome. Phosphorylation at Thr-534 by AMPK promotes its interaction with YWHAG/14-3-3-gamma, thereby preventing UFL1 association with PDCD1/PD-1 substrate.

It localises to the endoplasmic reticulum membrane. The protein localises to the cytoplasm. The protein resides in the cytosol. It is found in the nucleus. Its subcellular location is the chromosome. Functionally, E3 protein ligase that mediates ufmylation, the covalent attachment of the ubiquitin-like modifier UFM1 to lysine residues on target proteins, and which plays a key role in various processes, such as ribosome recycling, response to DNA damage, interferon response or reticulophagy (also called ER-phagy). Catalyzes ufmylation of many protein, such as CD274/PD-L1, CDK5RAP3, CYB5R3, DDRGK1, EIF6, histone H4, MRE11, P4HB, PDCD1/PD-1, TRIP4, RPN1, RPS20/uS10, RPL10/uL16, RPL26/uL24, SYVN1/HRD1 and TP53/p53. As part of the UREL complex, plays a key role in ribosome recycling by catalyzing mono-ufmylation of RPL26/uL24 subunit of the 60S ribosome. Ufmylation of RPL26/uL24 occurs on free 60S ribosomes following ribosome dissociation: it weakens the junction between post-termination 60S subunits and SEC61 translocons, promoting release and recycling of the large ribosomal subunit from the endoplasmic reticulum membrane. Ufmylation of RPL26/uL24 and subsequent 60S ribosome recycling either take place after normal termination of translation or after ribosome stalling during cotranslational translocation at the endoplasmic reticulum. Involved in reticulophagy in response to endoplasmic reticulum stress by mediating ufmylation of proteins such as CYB5R3 and RPN1, thereby promoting lysosomal degradation of ufmylated proteins. Ufmylation in response to endoplasmic reticulum stress is essential for processes such as hematopoiesis, blood vessel morphogenesis or inflammatory response. Regulates inflammation in response to endoplasmic reticulum stress by promoting reticulophagy, leading to inhibit the activity of the NF-kappa-B transcription factor. Mediates ufmylation of DDRGK1 and CDK5RAP3; the role of these modifications is however unclear: as both DDRGK1 and CDK5RAP3 act as substrate adapters for ufmylation, it is uncertain whether ufmylation of these proteins is, a collateral effect or is required for ufmylation. Acts as a negative regulator of T-cell activation by mediating ufmylation and stabilization of PDCD1/PD-1. Also involved in the response to DNA damage: recruited to double-strand break sites following DNA damage and mediates monoufmylation of histone H4 and ufmylation of MRE11. Mediates ufmylation of TP53/p53, promoting its stability. Catalyzes ufmylation of TRIP4, thereby playing a role in nuclear receptor-mediated transcription. Required for hematopoietic stem cell function and hematopoiesis. This is E3 UFM1-protein ligase 1 from Bos taurus (Bovine).